An 89-amino-acid polypeptide reads, in one-letter code: Small ribosomal subunit protein bS16 (89 aa).

Belongs to the bacterial ribosomal protein bS16 family.

This Psychrobacter arcticus (strain DSM 17307 / VKM B-2377 / 273-4) protein is Small ribosomal subunit protein bS16.